Consider the following 690-residue polypeptide: Tripartite terminase subunit 3 (690 aa).

The short motif at 226-233 (IPRRHGKT) is the Walker A motif element. The Walker B motif motif lies at 321–326 (LLFVDE). Catalysis depends on Glu326, which acts as the For ATPase activity. Residues Asp481, Glu555, and Asp667 each act as for nuclease activity in the active site.

This sequence belongs to the herpesviridae TRM3 protein family. In terms of assembly, interacts with the terminase subunits TRM1 and TRM2. Interacts with portal protein.

It is found in the host nucleus. Functionally, component of the molecular motor that translocates viral genomic DNA in empty capsid during DNA packaging. Forms a tripartite terminase complex together with TRM1 and TRM2 in the host cytoplasm. Once the complex reaches the host nucleus, it interacts with the capsid portal vertex. This portal forms a ring in which genomic DNA is translocated into the capsid. TRM3 carries an RNase H-like nuclease activity that plays an important role for the cleavage of concatemeric viral DNA into unit length genomes. The sequence is that of Tripartite terminase subunit 3 from Homo sapiens (Human).